Consider the following 441-residue polypeptide: Interferon-related developmental regulator 2 (441 aa).

Residues 1 to 15 (MPRARKGNALRKGGQ) are compositionally biased toward basic residues. The disordered stretch occupies residues 1–51 (MPRARKGNALRKGGQRRGGGARSSTQADSGSSEDEAASEARSTTSDCPSLL).

The protein belongs to the IFRD family. Associates with ribosomes; promoting ribosome inactivation.

Ribosome-binding protein that acts as an inhibitor of mRNA translation by promoting ribosome inactivation. Associates with the P- and E-sites of the ribosome and inserts a C-terminal helix into the mRNA exit channel to preclude translation. The chain is Interferon-related developmental regulator 2 from Mus musculus (Mouse).